The primary structure comprises 833 residues: Leucine--tRNA ligase (833 aa).

Positions 41-52 (PYPSGAGLHVGH) match the 'HIGH' region motif. The 'KMSKS' region motif lies at 610–614 (KMSKS). K613 is an ATP binding site.

It belongs to the class-I aminoacyl-tRNA synthetase family.

The protein localises to the cytoplasm. The enzyme catalyses tRNA(Leu) + L-leucine + ATP = L-leucyl-tRNA(Leu) + AMP + diphosphate. This is Leucine--tRNA ligase from Streptococcus equi subsp. zooepidemicus (strain MGCS10565).